We begin with the raw amino-acid sequence, 210 residues long: TM2 domain-containing protein C02F5.13 (210 aa).

Residues 1 to 18 form the signal peptide; sequence MRRLPWLIPFFLVNISNG. At 19–138 the chain is on the extracellular side; the sequence is NNEFRIEFEY…PRTFTKSTPC (120 aa). N-linked (GlcNAc...) asparagine glycosylation is present at Asn91. Residues 139-159 traverse the membrane as a helical segment; the sequence is IIYNGHYFLTTLLYSIFLGVV. Positions 143-191 constitute a TM2 domain; sequence GHYFLTTLLYSIFLGVVAVDRFCLGYSAMAVGKLMTLGGFGIWWIVDIF. The Cytoplasmic portion of the chain corresponds to 160-178; sequence AVDRFCLGYSAMAVGKLMT. A helical membrane pass occupies residues 179–199; the sequence is LGGFGIWWIVDIFLLVLGVLG. Residues 200-210 lie on the Extracellular side of the membrane; the sequence is PADDSSWEPYY.

The protein belongs to the TM2 family.

Its subcellular location is the membrane. In Caenorhabditis elegans, this protein is TM2 domain-containing protein C02F5.13.